The chain runs to 139 residues: uncharacterized protein (139 aa).

Residues 1–116 form a disordered region; sequence MYNPWQVGAS…TRPRVVARGK (116 aa). 2 stretches are compositionally biased toward low complexity: residues 50-70 and 84-110; these read RPRP…GPRP and LPAY…TRPR.

This is an uncharacterized protein from Homo sapiens (Human).